Reading from the N-terminus, the 202-residue chain is B-cell CLL/lymphoma 7 protein family member B (202 aa).

Residues 53–202 form a disordered region; the sequence is DSKEKEKSKS…PTVPQTASES (150 aa). The span at 90–99 shows a compositional bias: polar residues; the sequence is ENSNQSSVSD. Low complexity predominate over residues 107-123; it reads SSTNSSPSPQQSESLSP. Phosphoserine occurs at positions 114, 118, 120, 122, 127, 148, and 152.

The protein belongs to the BCL7 family. As to expression, ubiquitous.

Positive regulator of apoptosis. Plays a role in the Wnt signaling pathway, negatively regulating the expression of Wnt signaling components CTNNB1 and HMGA1. Involved in cell cycle progression, maintenance of the nuclear structure and stem cell differentiation. May play a role in lung tumor development or progression. This Homo sapiens (Human) protein is B-cell CLL/lymphoma 7 protein family member B (BCL7B).